The primary structure comprises 453 residues: Bifunctional protein GlmU (453 aa).

Residues 1–225 form a pyrophosphorylase region; that stretch reads MNIVILAAGT…EWETLGVNSK (225 aa). Residues 6–9, Lys20, Gln71, 76–77, 98–100, Gly135, Glu150, Asn165, and Asn223 each bind UDP-N-acetyl-alpha-D-glucosamine; these read LAAG, GT, and YGD. Asp100 lines the Mg(2+) pocket. Asn223 serves as a coordination point for Mg(2+). The interval 226 to 246 is linker; it reads QQLAELERIHQRNVADALLVA. The interval 247–453 is N-acetyltransferase; sequence GVTLADPARL…GYVRPTKKKS (207 aa). 2 residues coordinate UDP-N-acetyl-alpha-D-glucosamine: Arg329 and Lys347. His359 acts as the Proton acceptor in catalysis. Residues Tyr362 and Asn373 each contribute to the UDP-N-acetyl-alpha-D-glucosamine site. Acetyl-CoA-binding positions include Ala376, 382–383, Ser401, and Ala419; that span reads NY.

In the N-terminal section; belongs to the N-acetylglucosamine-1-phosphate uridyltransferase family. This sequence in the C-terminal section; belongs to the transferase hexapeptide repeat family. Homotrimer. Requires Mg(2+) as cofactor.

It is found in the cytoplasm. The catalysed reaction is alpha-D-glucosamine 1-phosphate + acetyl-CoA = N-acetyl-alpha-D-glucosamine 1-phosphate + CoA + H(+). It catalyses the reaction N-acetyl-alpha-D-glucosamine 1-phosphate + UTP + H(+) = UDP-N-acetyl-alpha-D-glucosamine + diphosphate. Its pathway is nucleotide-sugar biosynthesis; UDP-N-acetyl-alpha-D-glucosamine biosynthesis; N-acetyl-alpha-D-glucosamine 1-phosphate from alpha-D-glucosamine 6-phosphate (route II): step 2/2. The protein operates within nucleotide-sugar biosynthesis; UDP-N-acetyl-alpha-D-glucosamine biosynthesis; UDP-N-acetyl-alpha-D-glucosamine from N-acetyl-alpha-D-glucosamine 1-phosphate: step 1/1. It participates in bacterial outer membrane biogenesis; LPS lipid A biosynthesis. Catalyzes the last two sequential reactions in the de novo biosynthetic pathway for UDP-N-acetylglucosamine (UDP-GlcNAc). The C-terminal domain catalyzes the transfer of acetyl group from acetyl coenzyme A to glucosamine-1-phosphate (GlcN-1-P) to produce N-acetylglucosamine-1-phosphate (GlcNAc-1-P), which is converted into UDP-GlcNAc by the transfer of uridine 5-monophosphate (from uridine 5-triphosphate), a reaction catalyzed by the N-terminal domain. The chain is Bifunctional protein GlmU from Paraburkholderia xenovorans (strain LB400).